Here is a 420-residue protein sequence, read N- to C-terminus: MATHEEFIRTQVFGTVFEITNRYTDLNPVGMGAFGLVCSATDTLVGQPVAIKKIMKPFSTAVLAKRTYRELKLLKHLRHENLICLQDIFLSPLEDIYFVTELQGTDLHRLLQTRPLEKQFVQYFLYQILRGLKYVHSAGVIHRDLKPSNILINENCDLKICDFGLARIQDPQMTGYVSTRYYRAPEIMLTWQKYDVEVDIWSAGCIFSEMIEGKPLFPGKDHVHQFSIITDLLGSPPRDVINTICSENTLKFVTSLPHRDPVPFQERFKTVEPDAVDLLRRMLVFVPKKRITAADALVHPYLAPYHDPTDEPTAEAQFDWDFNDADLPVDTWRVMMYSEILDFHKIGGGDGQIDTNAAFDDQVAAAHAAAMAQHHHQTQQQSSGKHTNPTTSSSAATITVTVPIAITMPSLIMVIKRFTT.

ATP contacts are provided by residues 29–37 (VGMGAFGLV) and Lys-52. Asp-144 functions as the Proton acceptor in the catalytic mechanism. Position 174 is a phosphothreonine (Thr-174). The TXY signature appears at 174–176 (TGY). Phosphotyrosine is present on Tyr-176. A disordered region spans residues 372 to 394 (AQHHHQTQQQSSGKHTNPTTSSS).

This sequence belongs to the protein kinase superfamily. Ser/Thr protein kinase family. MAP kinase subfamily. HOG1 sub-subfamily. The cofactor is Mg(2+). Post-translationally, dually phosphorylated on Thr-174 and Tyr-176, which activates the enzyme.

It localises to the cytoplasm. It is found in the nucleus. The enzyme catalyses L-seryl-[protein] + ATP = O-phospho-L-seryl-[protein] + ADP + H(+). It carries out the reaction L-threonyl-[protein] + ATP = O-phospho-L-threonyl-[protein] + ADP + H(+). Its activity is regulated as follows. Activated by tyrosine and threonine phosphorylation. In terms of biological role, mitogen-activated protein kinase involved in a signal transduction pathway that is activated by changes in the osmolarity of the extracellular environment. Controls osmotic regulation of transcription of target genes. This Zygosaccharomyces rouxii protein is Mitogen-activated protein kinase HOG2 (HOG2).